Here is a 153-residue protein sequence, read N- to C-terminus: Aspartate carbamoyltransferase regulatory chain (153 aa).

Zn(2+) contacts are provided by Cys109, Cys114, Cys138, and Cys141.

It belongs to the PyrI family. In terms of assembly, contains catalytic and regulatory chains. It depends on Zn(2+) as a cofactor.

In terms of biological role, involved in allosteric regulation of aspartate carbamoyltransferase. This is Aspartate carbamoyltransferase regulatory chain from Edwardsiella ictaluri (strain 93-146).